We begin with the raw amino-acid sequence, 706 residues long: MEAQADAGGDDLAAMREQCRSLEEAIGFRRETQMGLVASLQRLVPDLVPSLDRSLRIIAAFNDRPFVPTPNPDGGHGKSPAALKPHHRRALPDPARSTRRKTSPGSSPASVAAAPGGLDAVRTMVAVCLLELVPFAEIDAAALARRLQAESSSASEAERTALADLAAELGGSAASAVVLALRRIAEDTGGVQIEEAMIGGKSMTMVWAIDRNKLLKELPESATLPLLQPPPAPQMPPSETDAGSAMIPRTPQQQQPQPDMWPHSMPPIFPRPRGMTMQGMQRVPGVPPGLMPLQRPFMGPAGVITMGGGVGPSPNQQKQKSEEDELKDLELLLNKKTYREKQNTKTGEELLDLIHRPTAKETAVAAKFKTKGGSQLKEYCTNLTKEDCRRQSGSFVACDKVHFRRIIAPHTDTNLGDCSFLDTCRHTKTCKYVHYELDQTPDIPPMMAGALAPPRQIRLQRAEYCSEVELGEAQWINCDIRNFRMDILGQFGVIMADPPWDIHMELPYGTMADDEMRTLNVPALQTDGLIFLWVTGRAMELGRECLELWGYKRVEEIIWVKTNQLQRIIRTGRTGHWLNHSKEHCLVGIKGNPLVNRNIDTDVIVAEVRETSRKPDEMYPMLERISPRTRKLELFARMHNAHAGWLSLGNQLNGVRLVDEGLRARYKAAYPDSEVQPPSPPRASAPIDGDQGTSQKPTVSDGERPA.

Disordered regions lie at residues 64–114 and 223–261; these read RPFV…VAAA and TLPL…PDMW. Residues 103-114 show a composition bias toward low complexity; the sequence is SPGSSPASVAAA. The span at 227-236 shows a compositional bias: pro residues; that stretch reads LQPPPAPQMP. Residues 479 to 480 and Asp-497 each bind S-adenosyl-L-methionine; that span reads DI. The segment at 567-580 is positively charged region required for RNA-binding; the sequence is RIIRTGRTGHWLNH. S-adenosyl-L-methionine-binding positions include Lys-614, 637–640, and 650–651; these read RMHN and NQ. The tract at residues 669–706 is disordered; it reads AYPDSEVQPPSPPRASAPIDGDQGTSQKPTVSDGERPA.

It belongs to the MT-A70-like family.

The protein resides in the nucleus. It carries out the reaction an adenosine in mRNA + S-adenosyl-L-methionine = an N(6)-methyladenosine in mRNA + S-adenosyl-L-homocysteine + H(+). In terms of biological role, probable N6-methyltransferase that methylates adenosine residues of some mRNAs. N6-methyladenosine (m6A), which is present at internal sites of some mRNAs, may play a role in the efficiency of mRNA splicing, transport or translation. The polypeptide is Probable N(6)-adenosine-methyltransferase MT-A70-like (Oryza sativa subsp. japonica (Rice)).